The chain runs to 311 residues: Porphobilinogen deaminase (311 aa).

Cys-241 is subject to S-(dipyrrolylmethanemethyl)cysteine.

This sequence belongs to the HMBS family. In terms of assembly, monomer. Dipyrromethane is required as a cofactor.

The catalysed reaction is 4 porphobilinogen + H2O = hydroxymethylbilane + 4 NH4(+). It participates in porphyrin-containing compound metabolism; protoporphyrin-IX biosynthesis; coproporphyrinogen-III from 5-aminolevulinate: step 2/4. Functionally, tetrapolymerization of the monopyrrole PBG into the hydroxymethylbilane pre-uroporphyrinogen in several discrete steps. This chain is Porphobilinogen deaminase, found in Shouchella clausii (strain KSM-K16) (Alkalihalobacillus clausii).